The following is a 789-amino-acid chain: Glycerol-3-phosphate acyltransferase (789 aa).

The HXXXXD motif signature appears at 275–280; it reads SHRSYI.

The protein belongs to the GPAT/DAPAT family.

The protein localises to the cell membrane. The catalysed reaction is sn-glycerol 3-phosphate + an acyl-CoA = a 1-acyl-sn-glycero-3-phosphate + CoA. The protein operates within phospholipid metabolism; CDP-diacylglycerol biosynthesis; CDP-diacylglycerol from sn-glycerol 3-phosphate: step 1/3. The protein is Glycerol-3-phosphate acyltransferase of Mycobacterium tuberculosis (strain ATCC 25177 / H37Ra).